The sequence spans 228 residues: Adapter protein MecA (228 aa).

This sequence belongs to the MecA family. In terms of assembly, homodimer.

In terms of biological role, enables the recognition and targeting of unfolded and aggregated proteins to the ClpC protease or to other proteins involved in proteolysis. In Lacticaseibacillus paracasei (strain ATCC 334 / BCRC 17002 / CCUG 31169 / CIP 107868 / KCTC 3260 / NRRL B-441) (Lactobacillus paracasei), this protein is Adapter protein MecA.